The primary structure comprises 1235 residues: ATP-dependent helicase/nuclease subunit A (1235 aa).

One can recognise a UvrD-like helicase ATP-binding domain in the interval Arg4–Met470. Ala25–Thr32 is a binding site for ATP. A UvrD-like helicase C-terminal domain is found at Gln501–Gly795.

This sequence belongs to the helicase family. AddA subfamily. As to quaternary structure, heterodimer of AddA and AddB/RexB. The cofactor is Mg(2+).

The enzyme catalyses Couples ATP hydrolysis with the unwinding of duplex DNA by translocating in the 3'-5' direction.. It catalyses the reaction ATP + H2O = ADP + phosphate + H(+). In terms of biological role, the heterodimer acts as both an ATP-dependent DNA helicase and an ATP-dependent, dual-direction single-stranded exonuclease. Recognizes the chi site generating a DNA molecule suitable for the initiation of homologous recombination. The AddA nuclease domain is required for chi fragment generation; this subunit has the helicase and 3' -&gt; 5' nuclease activities. This is ATP-dependent helicase/nuclease subunit A from Pediococcus pentosaceus (strain ATCC 25745 / CCUG 21536 / LMG 10740 / 183-1w).